Reading from the N-terminus, the 790-residue chain is Probable E3 ubiquitin-protein ligase MARCHF10 (790 aa).

The interval 33–240 (LKRQEHKKEP…PQNEPHTALS (208 aa)) is disordered. A compositionally biased stretch (basic and acidic residues) spans 34-48 (KRQEHKKEPNEKKQE). Over residues 61–70 (FSSGSSCKQS) the composition is skewed to low complexity. Ser-78 carries the phosphoserine modification. The span at 218–227 (PLERQKKGDP) shows a compositional bias: basic and acidic residues. Over residues 230-240 (RPQNEPHTALS) the composition is skewed to polar residues. Residues 284–308 (LSLNNEQENYDTEEETRTEEELLLA) are a coiled coil. 2 disordered regions span residues 323 to 416 (GTSA…EDVS) and 507 to 569 (LSPI…RHLQ). Composition is skewed to polar residues over residues 355 to 370 (RKTS…SSPG), 406 to 416 (GVTQVSAEDVS), and 511 to 520 (RNRNPSAASE). Over residues 521–533 (SHSEDTQGEEERA) the composition is skewed to basic and acidic residues. Residues 534–563 (STSQAQESPLLSDLPNPQSSMALGDSPSSP) are compositionally biased toward polar residues. The segment at 633-703 (DSEEEGDLCR…EMCKQGLLVD (71 aa)) adopts an RING-CH-type zinc-finger fold. Zn(2+) is bound by residues Cys-641, Cys-644, Cys-659, Cys-661, His-669, Cys-672, Cys-693, and Cys-696. The disordered stretch occupies residues 757-790 (ERMSRNYPQPRPEESESSESGDGNESNVYPGRVI). Residues 774–783 (SESGDGNESN) show a composition bias toward low complexity.

It catalyses the reaction S-ubiquitinyl-[E2 ubiquitin-conjugating enzyme]-L-cysteine + [acceptor protein]-L-lysine = [E2 ubiquitin-conjugating enzyme]-L-cysteine + N(6)-ubiquitinyl-[acceptor protein]-L-lysine.. The protein operates within protein modification; protein ubiquitination. Functionally, E3 ubiquitin-protein ligase. E3 ubiquitin ligases accept ubiquitin from an E2 ubiquitin-conjugating enzyme in the form of a thioester and then directly transfer the ubiquitin to targeted substrates. The polypeptide is Probable E3 ubiquitin-protein ligase MARCHF10 (Marchf10) (Rattus norvegicus (Rat)).